A 143-amino-acid polypeptide reads, in one-letter code: Large ribosomal subunit protein uL11 (143 aa).

This sequence belongs to the universal ribosomal protein uL11 family. In terms of assembly, part of the ribosomal stalk of the 50S ribosomal subunit. Interacts with L10 and the large rRNA to form the base of the stalk. L10 forms an elongated spine to which L12 dimers bind in a sequential fashion forming a multimeric L10(L12)X complex. In terms of processing, one or more lysine residues are methylated.

Its function is as follows. Forms part of the ribosomal stalk which helps the ribosome interact with GTP-bound translation factors. The protein is Large ribosomal subunit protein uL11 of Polynucleobacter necessarius subsp. necessarius (strain STIR1).